We begin with the raw amino-acid sequence, 460 residues long: Chromosomal replication initiator protein DnaA (460 aa).

Residues 1–84 are domain I, interacts with DnaA modulators; that stretch reads MAVSLWQQCI…RFDIGSRPSA (84 aa). A domain II region spans residues 84–123; that stretch reads AKKPEPAPVAAVRVPSPQTKASVGTAFNTTEPVANTNHRS. The tract at residues 124–340 is domain III, AAA+ region; it reads NINPTYQFDN…GALNRVIANA (217 aa). Residues glycine 168, glycine 170, lysine 171, and threonine 172 each coordinate ATP. Positions 341-460 are domain IV, binds dsDNA; that stretch reads NFTGRPITID…YANLIRTLSS (120 aa).

The protein belongs to the DnaA family. In terms of assembly, oligomerizes as a right-handed, spiral filament on DNA at oriC.

The protein resides in the cytoplasm. In terms of biological role, plays an essential role in the initiation and regulation of chromosomal replication. ATP-DnaA binds to the origin of replication (oriC) to initiate formation of the DNA replication initiation complex once per cell cycle. Binds the DnaA box (a 9 base pair repeat at the origin) and separates the double-stranded (ds)DNA. Forms a right-handed helical filament on oriC DNA; dsDNA binds to the exterior of the filament while single-stranded (ss)DNA is stabiized in the filament's interior. The ATP-DnaA-oriC complex binds and stabilizes one strand of the AT-rich DNA unwinding element (DUE), permitting loading of DNA polymerase. After initiation quickly degrades to an ADP-DnaA complex that is not apt for DNA replication. Binds acidic phospholipids. In Shewanella oneidensis (strain ATCC 700550 / JCM 31522 / CIP 106686 / LMG 19005 / NCIMB 14063 / MR-1), this protein is Chromosomal replication initiator protein DnaA.